Here is a 151-residue protein sequence, read N- to C-terminus: S-ribosylhomocysteine lyase (151 aa).

Residues histidine 54, histidine 58, and cysteine 121 each contribute to the Fe cation site.

It belongs to the LuxS family. In terms of assembly, homodimer. Fe cation serves as cofactor.

The enzyme catalyses S-(5-deoxy-D-ribos-5-yl)-L-homocysteine = (S)-4,5-dihydroxypentane-2,3-dione + L-homocysteine. In terms of biological role, involved in the synthesis of autoinducer 2 (AI-2) which is secreted by bacteria and is used to communicate both the cell density and the metabolic potential of the environment. The regulation of gene expression in response to changes in cell density is called quorum sensing. Catalyzes the transformation of S-ribosylhomocysteine (RHC) to homocysteine (HC) and 4,5-dihydroxy-2,3-pentadione (DPD). This is S-ribosylhomocysteine lyase from Clostridioides difficile (strain 630) (Peptoclostridium difficile).